A 111-amino-acid polypeptide reads, in one-letter code: Large ribosomal subunit protein uL24 (111 aa).

It belongs to the universal ribosomal protein uL24 family. Part of the 50S ribosomal subunit.

Functionally, one of two assembly initiator proteins, it binds directly to the 5'-end of the 23S rRNA, where it nucleates assembly of the 50S subunit. One of the proteins that surrounds the polypeptide exit tunnel on the outside of the subunit. The sequence is that of Large ribosomal subunit protein uL24 from Bifidobacterium longum (strain DJO10A).